Consider the following 403-residue polypeptide: Tryptophan synthase beta chain 1 (403 aa).

Lys-96 carries the post-translational modification N6-(pyridoxal phosphate)lysine.

The protein belongs to the TrpB family. As to quaternary structure, tetramer of two alpha and two beta chains. It depends on pyridoxal 5'-phosphate as a cofactor.

It carries out the reaction (1S,2R)-1-C-(indol-3-yl)glycerol 3-phosphate + L-serine = D-glyceraldehyde 3-phosphate + L-tryptophan + H2O. It participates in amino-acid biosynthesis; L-tryptophan biosynthesis; L-tryptophan from chorismate: step 5/5. The beta subunit is responsible for the synthesis of L-tryptophan from indole and L-serine. This chain is Tryptophan synthase beta chain 1 (trpB1), found in Wolinella succinogenes (strain ATCC 29543 / DSM 1740 / CCUG 13145 / JCM 31913 / LMG 7466 / NCTC 11488 / FDC 602W) (Vibrio succinogenes).